Reading from the N-terminus, the 62-residue chain is Potassium channel toxin alpha-KTx Tx308 (62 aa).

A signal peptide spans 1–18; the sequence is MQKLFIVLLLFCILRLDA. 3 cysteine pairs are disulfide-bonded: cysteine 28/cysteine 46, cysteine 33/cysteine 59, and cysteine 37/cysteine 61.

Belongs to the short scorpion toxin superfamily. Potassium channel inhibitor family. Alpha-KTx 23 subfamily. In terms of tissue distribution, expressed by the venom gland.

Its subcellular location is the secreted. Its function is as follows. May block potassium channels. This is Potassium channel toxin alpha-KTx Tx308 from Buthus israelis (Israeli scorpion).